The primary structure comprises 574 residues: Regulatory protein NPR4 (574 aa).

The tract at residues 1-21 (MAATAIEPSSSISFTSSHLSN) is disordered. Low complexity predominate over residues 9-20 (SSSISFTSSHLS). Position 11 is a phosphoserine (Ser11). Residues 54 to 130 (TDAEIIIEEE…IYTGRLKPFP (77 aa)) enclose the BTB domain. The segment at 133–147 (VSTCVDSVCAHDSCK) adopts a C2HC NPR-type zinc-finger fold. Zn(2+) contacts are provided by Cys136, Cys141, His143, and Cys146. 3 ANK repeats span residues 252 to 280 (ERTGKVLKALDSDDVELVKLLLTESDITL), 281 to 311 (DQANGLHYAVAYSDPKVVTQVLDLDMADVNF), and 315 to 344 (RGYTVLHIAAMRREPTIIIPLIQKGANASD). Residues 373–516 (EPSKYRLCID…MDQYMDEEIP (144 aa)) are salicylic acid-binding core (SBC). Arg419 contacts salicylate. The disordered stretch occupies residues 521–574 (PEKGTVKERRQKRMRYNELKNDVKKAYSKDKVARSCLSSSSPASSLREALENPT). Positions 535–553 (RYNELKNDVKKAYSKDKVA) are enriched in basic and acidic residues. Residues 554-567 (RSCLSSSSPASSLR) show a composition bias toward low complexity.

Belongs to the plant 'ANKYRIN-BTB/POZ' family. 'NPR1-like' subfamily. In terms of assembly, forms homodimers, homotetramers and heterodimers with NPR3 in the presence of salicylic acid (SA). Interacts with TGA2, TGA3, TGA5, TGA6 and TGA7. Interacts with CUL3A, a core component of the cullin-RING ubiquitin ligases (CRL). Binds to NPR1; this interaction is disrupted by association with SA, probably due to conformational changes.

It localises to the nucleus. It functions in the pathway protein modification; protein ubiquitination. Functionally, salicylic acid (SA)-binding substrate-specific adapter of an E3 ubiquitin-protein ligase complex (CUL3-RBX1-BTB) which mediates the ubiquitination and subsequent proteasomal degradation of NPR1 in the absence of SA. Together with NPR3, acts as receptor of salicylic acid to monitor immunity in a NPR1-dependent manner and induce systemic acquired resistance (SAR). Involved in the regulation of basal defense responses against pathogens, and may be implicated in the cross-talk between the SA- and JA-dependent signaling pathways. In Arabidopsis thaliana (Mouse-ear cress), this protein is Regulatory protein NPR4.